The following is a 380-amino-acid chain: E3 ubiquitin-protein ligase Iruka (380 aa).

Positions 50-92 (APEMDSSTAGASGSARSGSSGSGSSGSHDTLSRGSSSSGSQVN) are disordered. 2 stretches are compositionally biased toward low complexity: residues 55-68 (SSTA…RSGS) and 74-89 (SGSH…SSGS). Residues 253-294 (CSICWDDFKIDETVRKLPCSHLYHENCIVPWLNLHSTCPICR) form an RING-type; atypical zinc finger. The tract at residues 317-367 (EMAADGSNSERRSASTATGTDNPSPANNPSQAAAEGGRTRPDANPAQAARN) is disordered. A compositionally biased stretch (low complexity) spans 338 to 350 (NPSPANNPSQAAA).

In terms of assembly, interacts (via N-terminus) with CG7546 (via Ubl domain).

The catalysed reaction is S-ubiquitinyl-[E2 ubiquitin-conjugating enzyme]-L-cysteine + [acceptor protein]-L-lysine = [E2 ubiquitin-conjugating enzyme]-L-cysteine + N(6)-ubiquitinyl-[acceptor protein]-L-lysine.. It functions in the pathway protein modification; protein ubiquitination. Its function is as follows. E3 ubiquitin-protein ligase that mediates E2-dependent, 'Lys-48'- and/or 'Lys-63'-linked polyubiquitination of substrates. Recognizes miRNA-empty Ago1 and triggers its degradation via polyubiquitination independently of the Bag6 complex. By targeting miRNA-empty Ago1, eliminates dysfunctional Ago1 not able to bind miRNA and thereby plays a role in the quality control of miRNA-mediated silencing. This Drosophila melanogaster (Fruit fly) protein is E3 ubiquitin-protein ligase Iruka.